The sequence spans 171 residues: MFLVKMVLGFLIFLSPLCATGLDISQTDIIERSLNFLLFAGILWYFLAKKLRSFLHSKSLEISKRLEEIQAQLKVSKENKKKLLKELEQAKEKAELIISDANKEAYTITQKYELQTKMDVENLIKNSKALMDLEVKKIKRELVESVFKDLRESKKVSFNVQDCVNILKQRL.

The chain crosses the membrane as a helical span at residues 2–22; it reads FLVKMVLGFLIFLSPLCATGL.

This sequence belongs to the ATPase B chain family. As to quaternary structure, F-type ATPases have 2 components, F(1) - the catalytic core - and F(0) - the membrane proton channel. F(1) has five subunits: alpha(3), beta(3), gamma(1), delta(1), epsilon(1). F(0) has three main subunits: a(1), b(2) and c(10-14). The alpha and beta chains form an alternating ring which encloses part of the gamma chain. F(1) is attached to F(0) by a central stalk formed by the gamma and epsilon chains, while a peripheral stalk is formed by the delta and b chains.

The protein localises to the cell inner membrane. F(1)F(0) ATP synthase produces ATP from ADP in the presence of a proton or sodium gradient. F-type ATPases consist of two structural domains, F(1) containing the extramembraneous catalytic core and F(0) containing the membrane proton channel, linked together by a central stalk and a peripheral stalk. During catalysis, ATP synthesis in the catalytic domain of F(1) is coupled via a rotary mechanism of the central stalk subunits to proton translocation. Its function is as follows. Component of the F(0) channel, it forms part of the peripheral stalk, linking F(1) to F(0). The sequence is that of ATP synthase subunit b from Helicobacter pylori (strain Shi470).